Consider the following 148-residue polypeptide: Large ribosomal subunit protein bL9 (148 aa).

This sequence belongs to the bacterial ribosomal protein bL9 family.

In terms of biological role, binds to the 23S rRNA. The protein is Large ribosomal subunit protein bL9 of Aeromonas salmonicida (strain A449).